Reading from the N-terminus, the 521-residue chain is Vascular endothelial zinc finger 1 (521 aa).

A C2H2-type 1 zinc finger spans residues 74–96 (FVCTYCSKAFRDSYHLRRHESCH). Low complexity predominate over residues 140-155 (TTSSSGTNPSSSASTT). The disordered stretch occupies residues 140 to 167 (TTSSSGTNPSSSASTTAMPVTQSVKKPS). C2H2-type zinc fingers lie at residues 174-196 (HACE…KLSH), 202-224 (FECP…VRSH), 232-255 (YTCS…KHVH), 261-283 (FKCQ…MVRH), and 287-308 (VSCN…LKTH). Lysine 362 carries the N6-acetyllysine modification. 4 consecutive repeat copies span residues 394 to 400 (PVTLTTP), 445 to 451 (PVTITSP), 457 to 463 (PLTLTTP), and 479 to 485 (PVTITSP). The 4 X 7 AA repeats of P-[LV]-T-[IL]-T-[ST]-P stretch occupies residues 394–485 (PVTLTTPFSI…IAHPVTITSP (92 aa)).

Belongs to the krueppel C2H2-type zinc-finger protein family. As to quaternary structure, interacts with ARHGAP22. As to expression, ubiquitously expressed. Highest levels in skeletal muscle and kidney.

It localises to the nucleus. Functionally, possible transcription factor. Specifically binds to the CT/GC-rich region of the interleukin-3 promoter and mediates tax transactivation of IL-3. The sequence is that of Vascular endothelial zinc finger 1 (VEZF1) from Homo sapiens (Human).